The following is a 268-amino-acid chain: Tryptophan synthase alpha chain (268 aa).

Residues Glu-49 and Asp-60 each act as proton acceptor in the active site.

It belongs to the TrpA family. As to quaternary structure, tetramer of two alpha and two beta chains.

It catalyses the reaction (1S,2R)-1-C-(indol-3-yl)glycerol 3-phosphate + L-serine = D-glyceraldehyde 3-phosphate + L-tryptophan + H2O. It functions in the pathway amino-acid biosynthesis; L-tryptophan biosynthesis; L-tryptophan from chorismate: step 5/5. Functionally, the alpha subunit is responsible for the aldol cleavage of indoleglycerol phosphate to indole and glyceraldehyde 3-phosphate. This is Tryptophan synthase alpha chain from Salmonella paratyphi A (strain ATCC 9150 / SARB42).